The chain runs to 666 residues: Putative cysteine-rich receptor-like protein kinase 31 (666 aa).

The N-terminal stretch at 1 to 23 is a signal peptide; the sequence is MCLNTLCAILCFVLTVSFGFVSA. 2 Gnk2-homologous domains span residues 24–130 and 136–245; these read QKCG…NNSF and LEPT…GYKY. The Extracellular portion of the chain corresponds to 24 to 280; the sequence is QKCGESVFFR…PDGKKISTGV (257 aa). N-linked (GlcNAc...) asparagine glycans are attached at residues Asn52, Asn62, Asn104, Asn127, and Asn151. Residues 281–301 form a helical membrane-spanning segment; it reads IVAIVVSAVIFVVLVALGLVI. The Cytoplasmic segment spans residues 302–666; it reads WKRRQSYKTL…SASITRATPR (365 aa). One can recognise a Protein kinase domain in the interval 339-616; it reads FSRNNKLGQG…IFQMLTNSSI (278 aa). ATP-binding positions include 345 to 353 and Lys367; that span reads LGQGGFGEV. Tyr412 carries the post-translational modification Phosphotyrosine. Asp464 acts as the Proton acceptor in catalysis. The residue at position 468 (Ser468) is a Phosphoserine. The residue at position 504 (Thr504) is a Phosphothreonine. Tyr512 is subject to Phosphotyrosine.

This sequence belongs to the protein kinase superfamily. Ser/Thr protein kinase family. CRK subfamily.

Its subcellular location is the membrane. It carries out the reaction L-seryl-[protein] + ATP = O-phospho-L-seryl-[protein] + ADP + H(+). The enzyme catalyses L-threonyl-[protein] + ATP = O-phospho-L-threonyl-[protein] + ADP + H(+). The polypeptide is Putative cysteine-rich receptor-like protein kinase 31 (CRK31) (Arabidopsis thaliana (Mouse-ear cress)).